The chain runs to 93 residues: uncharacterized protein (93 aa).

The interval 35–72 (KSVPPPTPPKPVKKTPSPTLPKPSKQKQEPQVEVNEDR) is disordered. The segment covering 60-72 (QKQEPQVEVNEDR) has biased composition (basic and acidic residues).

This is an uncharacterized protein from Ostreid herpesvirus 1 (isolate France) (OsHV-1).